The sequence spans 441 residues: Rho-associated protein kinase 1 (441 aa).

Positions 1–99 (NSKSQMDKDY…RLEQEVNEHK (99 aa)) form a coiled coil. The interval 114–353 (EAKSVAMCEM…TLSRLEETNS (240 aa)) is SHROOM3 binding. Residues 356 to 422 (TKDIELLRKE…LAEIMNRKDF (67 aa)) enclose the RhoBD domain. Residues 418–441 (NRKDFKIDRKKANTQDLRKKKKKK) adopt a coiled-coil conformation.

It belongs to the protein kinase superfamily. AGC Ser/Thr protein kinase family. Homodimer. Interacts with RHOA (activated by GTP), RHOB, RHOC, GEM, MYLC2B, RHOE, PPP1R12A, LIMK1, LIMK2, TSG101, CHORDC1, DAPK3, PFN1, PTEN and JIP3. Interacts with FHOD1 in a Src-dependent manner. Interacts with ITGB1BP1 (via N-terminus and PTB domain). Interacts with SHROOM3. Mg(2+) is required as a cofactor.

It is found in the cytoplasm. The protein localises to the golgi apparatus membrane. Its subcellular location is the cytoskeleton. It localises to the microtubule organizing center. The protein resides in the centrosome. It is found in the centriole. The protein localises to the cell projection. Its subcellular location is the bleb. It localises to the cell membrane. The protein resides in the lamellipodium. It is found in the ruffle. The enzyme catalyses L-seryl-[protein] + ATP = O-phospho-L-seryl-[protein] + ADP + H(+). It carries out the reaction L-threonyl-[protein] + ATP = O-phospho-L-threonyl-[protein] + ADP + H(+). Activated by RHOA binding. Inhibited by Y-27632. In terms of biological role, protein kinase which is a key regulator of the actin cytoskeleton and cell polarity. Involved in regulation of smooth muscle contraction, actin cytoskeleton organization, stress fiber and focal adhesion formation, neurite retraction, cell adhesion and motility via phosphorylation of DAPK3, GFAP, LIMK1, LIMK2, MYL9/MLC2, TPPP, PFN1 and PPP1R12A. Phosphorylates FHOD1 and acts synergistically with it to promote SRC-dependent non-apoptotic plasma membrane blebbing. Phosphorylates JIP3 and regulates the recruitment of JNK to JIP3 upon UVB-induced stress. Acts as a suppressor of inflammatory cell migration by regulating PTEN phosphorylation and stability. Acts as a negative regulator of VEGF-induced angiogenic endothelial cell activation. Required for centrosome positioning and centrosome-dependent exit from mitosis. Plays a role in terminal erythroid differentiation. Inhibits podocyte motility via regulation of actin cytoskeletal dynamics and phosphorylation of CFL1. Promotes keratinocyte terminal differentiation. Involved in osteoblast compaction through the fibronectin fibrillogenesis cell-mediated matrix assembly process, essential for osteoblast mineralization. May regulate closure of the eyelids and ventral body wall by inducing the assembly of actomyosin bundles. In Bos taurus (Bovine), this protein is Rho-associated protein kinase 1 (ROCK1).